The sequence spans 112 residues: PTS system lactose-specific EIIA component (112 aa).

The region spanning 6–104 (EEISMVGFAL…TRYMIRMFKR (99 aa)) is the PTS EIIA type-3 domain. The Tele-phosphohistidine intermediate role is filled by H80. The residue at position 80 (H80) is a Phosphohistidine; by HPr. D83 is a binding site for Mg(2+).

Homotrimer. Requires Mg(2+) as cofactor.

Its subcellular location is the cytoplasm. In terms of biological role, the phosphoenolpyruvate-dependent sugar phosphotransferase system (sugar PTS), a major carbohydrate active transport system, catalyzes the phosphorylation of incoming sugar substrates concomitantly with their translocation across the cell membrane. The enzyme II LacEF PTS system is involved in lactose transport. The chain is PTS system lactose-specific EIIA component from Lacticaseibacillus casei (Lactobacillus casei).